Reading from the N-terminus, the 201-residue chain is Recombination protein RecR (201 aa).

The segment at 57-72 adopts a C4-type zinc-finger fold; that stretch reads CECCRTLTEEPLCRIC. A Toprim domain is found at 81–176; it reads GVLCIVETPA…NTTRIAHGVP (96 aa).

It belongs to the RecR family.

In terms of biological role, may play a role in DNA repair. It seems to be involved in an RecBC-independent recombinational process of DNA repair. It may act with RecF and RecO. The chain is Recombination protein RecR from Idiomarina loihiensis (strain ATCC BAA-735 / DSM 15497 / L2-TR).